Reading from the N-terminus, the 140-residue chain is HTH-type transcriptional regulator AdhR (140 aa).

The HTH merR-type domain occupies 1–69 (MNIAQVAKQF…IEALIEYTTL (69 aa)). Residues 3–22 (IAQVAKQFGLTAATLRYYER) constitute a DNA-binding region (H-T-H motif). Residues 75–125 (RTVEARKNILADERQRLIEKRKEIDETIKRLDTKIKDYDGKLRENEAKLKS) adopt a coiled-coil conformation. Residues 120–140 (EAKLKSRPKTESLHGSVEQRR) are disordered.

In terms of biological role, transcriptional regulator involved in the response to aldehyde stress. Binds to the promoter region of the adhA-yraA operon, the yraC and its own promoter region; binding is unchanged in the presence of aldehydes. This chain is HTH-type transcriptional regulator AdhR (adhR), found in Bacillus subtilis (strain 168).